The sequence spans 532 residues: Optineurin (532 aa).

Coiled coils occupy residues 27-143 (SMKN…LKLG) and 195-466 (EEVA…EEMM). Residues 502–532 (QPSITVYTCPKCNLTVPDMDTLQIHVMDCIT) form a CCHC NOA-type zinc finger. Zn(2+) is bound by residues Cys510, Cys513, His526, and Cys530.

The protein resides in the cytoplasm. It localises to the perinuclear region. Its subcellular location is the golgi apparatus. The protein localises to the trans-Golgi network. It is found in the cytoplasmic vesicle. The protein resides in the recycling endosome. It localises to the autophagosome. In terms of biological role, probably part of the TNF-alpha signaling pathway that can shift the equilibrium toward induction of cell death. May act by regulating membrane trafficking and cellular morphogenesis. The sequence is that of Optineurin (optn) from Xenopus laevis (African clawed frog).